The primary structure comprises 402 residues: Phosphoglycerate kinase (402 aa).

Residues 24–26 (DLN), arginine 39, 62–65 (HLGR), arginine 121, and arginine 161 each bind substrate. ATP contacts are provided by residues lysine 211, glycine 299, glutamate 330, and 359 to 362 (GGDS).

Belongs to the phosphoglycerate kinase family. In terms of assembly, monomer.

The protein localises to the cytoplasm. The enzyme catalyses (2R)-3-phosphoglycerate + ATP = (2R)-3-phospho-glyceroyl phosphate + ADP. The protein operates within carbohydrate degradation; glycolysis; pyruvate from D-glyceraldehyde 3-phosphate: step 2/5. This is Phosphoglycerate kinase from Mycolicibacterium gilvum (strain PYR-GCK) (Mycobacterium gilvum (strain PYR-GCK)).